A 225-amino-acid polypeptide reads, in one-letter code: Phosphatidylserine decarboxylase proenzyme (225 aa).

Catalysis depends on serine 182, which acts as the Schiff-base intermediate with substrate; via pyruvic acid. Pyruvic acid (Ser); by autocatalysis is present on serine 182.

It belongs to the phosphatidylserine decarboxylase family. PSD-A subfamily. As to quaternary structure, heterodimer of a large membrane-associated beta subunit and a small pyruvoyl-containing alpha subunit. It depends on pyruvate as a cofactor. Post-translationally, is synthesized initially as an inactive proenzyme. Formation of the active enzyme involves a self-maturation process in which the active site pyruvoyl group is generated from an internal serine residue via an autocatalytic post-translational modification. Two non-identical subunits are generated from the proenzyme in this reaction, and the pyruvate is formed at the N-terminus of the alpha chain, which is derived from the carboxyl end of the proenzyme. The post-translation cleavage follows an unusual pathway, termed non-hydrolytic serinolysis, in which the side chain hydroxyl group of the serine supplies its oxygen atom to form the C-terminus of the beta chain, while the remainder of the serine residue undergoes an oxidative deamination to produce ammonia and the pyruvoyl prosthetic group on the alpha chain.

The protein resides in the cell membrane. The enzyme catalyses a 1,2-diacyl-sn-glycero-3-phospho-L-serine + H(+) = a 1,2-diacyl-sn-glycero-3-phosphoethanolamine + CO2. The protein operates within phospholipid metabolism; phosphatidylethanolamine biosynthesis; phosphatidylethanolamine from CDP-diacylglycerol: step 2/2. Catalyzes the formation of phosphatidylethanolamine (PtdEtn) from phosphatidylserine (PtdSer). This is Phosphatidylserine decarboxylase proenzyme from Neorickettsia sennetsu (strain ATCC VR-367 / Miyayama) (Ehrlichia sennetsu).